Consider the following 316-residue polypeptide: Acetyl-coenzyme A carboxylase carboxyl transferase subunit beta (316 aa).

Positions 39-308 (LWHKCSKCGV…TPPMVLWETM (270 aa)) constitute a CoA carboxyltransferase N-terminal domain. Residues Cys43, Cys46, Cys62, and Cys65 each coordinate Zn(2+). Residues 43-65 (CSKCGVLTYTKDLRANQMVCVEC) form a C4-type zinc finger.

The protein belongs to the AccD/PCCB family. Acetyl-CoA carboxylase is a heterohexamer composed of biotin carboxyl carrier protein (AccB), biotin carboxylase (AccC) and two subunits each of ACCase subunit alpha (AccA) and ACCase subunit beta (AccD). Requires Zn(2+) as cofactor.

It is found in the cytoplasm. The enzyme catalyses N(6)-carboxybiotinyl-L-lysyl-[protein] + acetyl-CoA = N(6)-biotinyl-L-lysyl-[protein] + malonyl-CoA. The protein operates within lipid metabolism; malonyl-CoA biosynthesis; malonyl-CoA from acetyl-CoA: step 1/1. Functionally, component of the acetyl coenzyme A carboxylase (ACC) complex. Biotin carboxylase (BC) catalyzes the carboxylation of biotin on its carrier protein (BCCP) and then the CO(2) group is transferred by the transcarboxylase to acetyl-CoA to form malonyl-CoA. The polypeptide is Acetyl-coenzyme A carboxylase carboxyl transferase subunit beta (Trichormus variabilis (strain ATCC 29413 / PCC 7937) (Anabaena variabilis)).